Reading from the N-terminus, the 209-residue chain is Uracil phosphoribosyltransferase (209 aa).

5-phospho-alpha-D-ribose 1-diphosphate is bound by residues Arg79, Arg104, and 131–139; that span reads DPMLATGGS. Uracil is bound by residues Ile194 and 199–201; that span reads GDA. Asp200 contributes to the 5-phospho-alpha-D-ribose 1-diphosphate binding site.

Belongs to the UPRTase family. The cofactor is Mg(2+).

The enzyme catalyses UMP + diphosphate = 5-phospho-alpha-D-ribose 1-diphosphate + uracil. It participates in pyrimidine metabolism; UMP biosynthesis via salvage pathway; UMP from uracil: step 1/1. Allosterically activated by GTP. Catalyzes the conversion of uracil and 5-phospho-alpha-D-ribose 1-diphosphate (PRPP) to UMP and diphosphate. The chain is Uracil phosphoribosyltransferase from Geobacillus kaustophilus (strain HTA426).